Here is a 474-residue protein sequence, read N- to C-terminus: Glutamate--tRNA ligase (474 aa).

The 'HIGH' region signature appears at 9-19 (PSPTGLLHMGG). The short motif at 238–242 (KLSKR) is the 'KMSKS' region element. Lysine 241 serves as a coordination point for ATP.

This sequence belongs to the class-I aminoacyl-tRNA synthetase family. Glutamate--tRNA ligase type 1 subfamily. In terms of assembly, monomer.

It is found in the cytoplasm. It catalyses the reaction tRNA(Glu) + L-glutamate + ATP = L-glutamyl-tRNA(Glu) + AMP + diphosphate. Its function is as follows. Catalyzes the attachment of glutamate to tRNA(Glu) in a two-step reaction: glutamate is first activated by ATP to form Glu-AMP and then transferred to the acceptor end of tRNA(Glu). This Buchnera aphidicola subsp. Cinara cedri (strain Cc) protein is Glutamate--tRNA ligase.